The following is a 211-amino-acid chain: Large ribosomal subunit protein mL48 (211 aa).

The transit peptide at 1–27 (MSGTLGKVLGVWTNTVSKQGFSLLRFR) directs the protein to the mitochondrion. N6-succinyllysine is present on Lys198.

It belongs to the mitochondrion-specific ribosomal protein mL48 family. As to quaternary structure, component of the mitochondrial ribosome large subunit (39S) which comprises a 16S rRNA and about 50 distinct proteins. Interacts with OXA1L.

Its subcellular location is the mitochondrion. This Mus musculus (Mouse) protein is Large ribosomal subunit protein mL48 (Mrpl48).